The chain runs to 922 residues: Non-centrosomal microtubule array protein 1 (922 aa).

Residues 1 to 10 show a composition bias toward polar residues; sequence MSNERVSTGS. 4 disordered regions span residues 1–134, 250–277, 465–491, and 533–563; these read MSNE…HLPP, PVRL…TVPR, KSRH…QMNL, and TQKE…SNLS. Composition is skewed to basic and acidic residues over residues 43-54 and 70-94; these read SMERKDMPDRPK and PKDR…KECA. The segment covering 99 to 113 has biased composition (low complexity); it reads SNTSSEHSSRSNSST. Basic and acidic residues-rich tracts occupy residues 256 to 276 and 468 to 484; these read RGDT…DTVP and HLSE…ERRG. The segment covering 539 to 563 has biased composition (low complexity); sequence SHSTPSQSRHSSSKSSHFNGSSNLS. Positions 564–728 form a coiled coil; that stretch reads TSEQLRLQEM…RSVSTLRLEQ (165 aa).

The protein localises to the cytoplasm. It is found in the cytoskeleton. Its subcellular location is the apical cell membrane. It localises to the cell junction. The protein resides in the hemidesmosome. The protein localises to the adherens junction. Functionally, plays a role in the assembly of microtubule arrays in the germline acting redundantly with ptrn-1 to control circumferential microtubule assembly along the body which is necessary for larval development, viability, and morphology and integrity of the epidermis. Required for microtubule stability and anchorage by binding to microtubule minus ends. Recruited to hemidesomosomes in early embryonic elongation to direct the nucleation and growth of non-centrosomal microtubules. In terms of biological role, required for normal nuclear migration in the embryonic epidermis. Directs the assembly of non-centrosomal microtubule arrays that determine the position of nuclei within intracellular compartments in the epidermis and this is independent of ptrn-1 activity. The sequence is that of Non-centrosomal microtubule array protein 1 from Caenorhabditis elegans.